Consider the following 733-residue polypeptide: Phosphoribosylformylglycinamidine synthase subunit PurL (733 aa).

Histidine 44 is an active-site residue. Tyrosine 47 and lysine 86 together coordinate ATP. A Mg(2+)-binding site is contributed by glutamate 88. Residues 89-92 (SHNH) and arginine 111 each bind substrate. Residue histidine 90 is the Proton acceptor of the active site. Aspartate 112 lines the Mg(2+) pocket. Glutamine 233 contacts substrate. Aspartate 261 serves as a coordination point for Mg(2+). 305–307 (ESQ) lines the substrate pocket. Positions 492 and 529 each coordinate ATP. Asparagine 530 contacts Mg(2+). Position 532 (serine 532) interacts with substrate.

It belongs to the FGAMS family. In terms of assembly, monomer. Part of the FGAM synthase complex composed of 1 PurL, 1 PurQ and 2 PurS subunits.

It localises to the cytoplasm. It carries out the reaction N(2)-formyl-N(1)-(5-phospho-beta-D-ribosyl)glycinamide + L-glutamine + ATP + H2O = 2-formamido-N(1)-(5-O-phospho-beta-D-ribosyl)acetamidine + L-glutamate + ADP + phosphate + H(+). It functions in the pathway purine metabolism; IMP biosynthesis via de novo pathway; 5-amino-1-(5-phospho-D-ribosyl)imidazole from N(2)-formyl-N(1)-(5-phospho-D-ribosyl)glycinamide: step 1/2. Its function is as follows. Part of the phosphoribosylformylglycinamidine synthase complex involved in the purines biosynthetic pathway. Catalyzes the ATP-dependent conversion of formylglycinamide ribonucleotide (FGAR) and glutamine to yield formylglycinamidine ribonucleotide (FGAM) and glutamate. The FGAM synthase complex is composed of three subunits. PurQ produces an ammonia molecule by converting glutamine to glutamate. PurL transfers the ammonia molecule to FGAR to form FGAM in an ATP-dependent manner. PurS interacts with PurQ and PurL and is thought to assist in the transfer of the ammonia molecule from PurQ to PurL. In Thermomicrobium roseum (strain ATCC 27502 / DSM 5159 / P-2), this protein is Phosphoribosylformylglycinamidine synthase subunit PurL.